The sequence spans 444 residues: Glucoside xylosyltransferase 2 (444 aa).

At 1–4 the chain is on the cytoplasmic side; it reads MKLR. A helical; Signal-anchor for type II membrane protein membrane pass occupies residues 5–25; the sequence is SKAAALLLLALAVLLLALLSL. Over 26–444 the chain is Lumenal; that stretch reads RARRDPEPPG…IIHMGPNPMS (419 aa). A disordered region spans residues 31–101; sequence PEPPGFPARP…LARRPGETRS (71 aa). The segment covering 68 to 83 has biased composition (basic residues); sequence RSPRRQPPRLRPRAGR. A compositionally biased stretch (basic and acidic residues) spans 87-101; it reads ASREKLARRPGETRS. A glycan (N-linked (GlcNAc...) asparagine) is linked at Asn275.

It belongs to the glycosyltransferase 8 family.

Its subcellular location is the membrane. The catalysed reaction is 3-O-(beta-D-glucosyl)-L-seryl-[EGF-like domain protein] + UDP-alpha-D-xylose = 3-O-[alpha-D-xylosyl-(1-&gt;3)-beta-D-glucosyl]-L-seryl-[EGF-like domain protein] + UDP + H(+). Glycosyltransferase which elongates the O-linked glucose attached to EGF-like repeats in the extracellular domain of Notch proteins by catalyzing the addition of xylose. In Mus musculus (Mouse), this protein is Glucoside xylosyltransferase 2 (Gxylt2).